We begin with the raw amino-acid sequence, 291 residues long: D-alanyl-D-alanine carboxypeptidase DacB2 (291 aa).

The first 22 residues, 1–22, serve as a signal peptide directing secretion; the sequence is MRKLMTATAALCACAVTVSAGA. The active-site Acyl-ester intermediate is the Ser-69. Lys-72 functions as the Proton acceptor in the catalytic mechanism. Ser-124 is a catalytic residue.

This sequence belongs to the peptidase S11 family.

It localises to the periplasm. It participates in cell wall biogenesis; peptidoglycan biosynthesis. With respect to regulation, inhibited by the beta-lactam antibiotic meropenem. Inhibited by the non-specific inhibitor phenylmethylsulfonyl fluoride (PMSF). Probably cleaves the terminal D-Ala-D-Ala dipeptide of the peptidoglycan stem peptide. Shows significant D,D-carboxypeptidase activity in vitro. Acts on the synthetic penta-peptide substrate Penta-DAP (L-Ala-gamma-D-Gln-DAP-D-Ala-D-Ala). Also shows weak activity on Penta-Lys (L-Ala-gamma-Glu-L-Lys-D-Ala-D-Ala). The catalytic domain binds weakly to peptidoglycan in vitro. Plays an important role in the maintenance of colony morphology and cell wall permeability and integrity. This chain is D-alanyl-D-alanine carboxypeptidase DacB2, found in Mycobacterium tuberculosis (strain ATCC 25618 / H37Rv).